The sequence spans 855 residues: DNA mismatch repair protein MutS (855 aa).

Position 613–620 (613–620 (GPNMGGKS)) interacts with ATP.

The protein belongs to the DNA mismatch repair MutS family.

This protein is involved in the repair of mismatches in DNA. It is possible that it carries out the mismatch recognition step. This protein has a weak ATPase activity. This is DNA mismatch repair protein MutS from Azotobacter vinelandii (strain DJ / ATCC BAA-1303).